A 341-amino-acid chain; its full sequence is UDP-3-O-acylglucosamine N-acyltransferase (341 aa).

H241 serves as the catalytic Proton acceptor.

The protein belongs to the transferase hexapeptide repeat family. LpxD subfamily. In terms of assembly, homotrimer.

It carries out the reaction a UDP-3-O-[(3R)-3-hydroxyacyl]-alpha-D-glucosamine + a (3R)-hydroxyacyl-[ACP] = a UDP-2-N,3-O-bis[(3R)-3-hydroxyacyl]-alpha-D-glucosamine + holo-[ACP] + H(+). The protein operates within bacterial outer membrane biogenesis; LPS lipid A biosynthesis. In terms of biological role, catalyzes the N-acylation of UDP-3-O-acylglucosamine using 3-hydroxyacyl-ACP as the acyl donor. Is involved in the biosynthesis of lipid A, a phosphorylated glycolipid that anchors the lipopolysaccharide to the outer membrane of the cell. The polypeptide is UDP-3-O-acylglucosamine N-acyltransferase (Christiangramia forsetii (strain DSM 17595 / CGMCC 1.15422 / KT0803) (Gramella forsetii)).